The chain runs to 405 residues: S-adenosylmethionine sensor upstream of mTORC1 (405 aa).

A disordered region spans residues 1-34 (MEPGAGGRNTARAQRAGSPNTPPPREQERKLEQE). Over residues 25–34 (REQERKLEQE) the composition is skewed to basic and acidic residues. Positions 95, 172, 190, 202, 203, and 244 each coordinate S-adenosyl-L-methionine.

It belongs to the BMT2/SAMTOR family. Interacts with the DEPDC5 subunit of the GATOR1 complex; interaction is disrupted when SAMTOR binds S-adenosyl-L-methionine. Interacts with the KICSTOR complex; interaction is disrupted when SAMTOR binds S-adenosyl-L-methionine.

S-adenosyl-L-methionine-binding protein that acts as an inhibitor of mTORC1 signaling via interaction with the GATOR1 and KICSTOR complexes. Acts as a sensor of S-adenosyl-L-methionine to signal methionine sufficiency to mTORC1: in presence of methionine, binds S-adenosyl-L-methionine, leading to disrupt interaction with the GATOR1 and KICSTOR complexes and promote mTORC1 signaling. Upon methionine starvation, S-adenosyl-L-methionine levels are reduced, thereby promoting the association with GATOR1 and KICSTOR, leading to inhibit mTORC1 signaling. Probably also acts as a S-adenosyl-L-methionine-dependent methyltransferase (Potential). The chain is S-adenosylmethionine sensor upstream of mTORC1 from Homo sapiens (Human).